The following is a 499-amino-acid chain: Probable cytosol aminopeptidase (499 aa).

Residues lysine 271 and aspartate 276 each contribute to the Mn(2+) site. The active site involves lysine 283. Aspartate 294, aspartate 353, and glutamate 355 together coordinate Mn(2+). The active site involves arginine 357.

Belongs to the peptidase M17 family. Requires Mn(2+) as cofactor.

Its subcellular location is the cytoplasm. The enzyme catalyses Release of an N-terminal amino acid, Xaa-|-Yaa-, in which Xaa is preferably Leu, but may be other amino acids including Pro although not Arg or Lys, and Yaa may be Pro. Amino acid amides and methyl esters are also readily hydrolyzed, but rates on arylamides are exceedingly low.. It catalyses the reaction Release of an N-terminal amino acid, preferentially leucine, but not glutamic or aspartic acids.. Functionally, presumably involved in the processing and regular turnover of intracellular proteins. Catalyzes the removal of unsubstituted N-terminal amino acids from various peptides. The protein is Probable cytosol aminopeptidase of Bordetella bronchiseptica (strain ATCC BAA-588 / NCTC 13252 / RB50) (Alcaligenes bronchisepticus).